The primary structure comprises 173 residues: Co-chaperone protein HscB (173 aa).

Residues 2 to 74 enclose the J domain; the sequence is DYFTLLGMPN…LSRAEYMLSL (73 aa).

Belongs to the HscB family. As to quaternary structure, interacts with HscA and stimulates its ATPase activity. Interacts with IscU.

In terms of biological role, co-chaperone involved in the maturation of iron-sulfur cluster-containing proteins. Seems to help targeting proteins to be folded toward HscA. The sequence is that of Co-chaperone protein HscB from Proteus mirabilis (strain HI4320).